A 229-amino-acid chain; its full sequence is ATPase SWSAP1 (229 aa).

Residues Pro209–Pro229 form a disordered region.

In terms of assembly, interacts with ZSWIM7; they form a functional complex involved in homologous recombination repair and stabilize each other. Interacts with RAD51, RAD51B, RAD51C, RAD51D and XRCC3; involved in homologous recombination repair.

It is found in the nucleus. Its function is as follows. ATPase which is preferentially stimulated by single-stranded DNA and is involved in homologous recombination repair (HRR). Has a DNA-binding activity which is independent of its ATPase activity. The sequence is that of ATPase SWSAP1 (SWSAP1) from Homo sapiens (Human).